Consider the following 135-residue polypeptide: MSALVYFSSSSENTHRFMQRLGLPATRIPLNERERIQVDEPYILVVPSYGGGMAGAVPRQVIRFLNDEHNRARIRGVIASGNRNFGDAWGCAGDVIAQKCGVPWLYRFELMGTQRDIDNVRKGVNEFWQQLSRSA.

It belongs to the NrdI family.

Its function is as follows. Probably involved in ribonucleotide reductase function. This Salmonella gallinarum (strain 287/91 / NCTC 13346) protein is Protein NrdI.